Reading from the N-terminus, the 479-residue chain is Cysteine--tRNA ligase (479 aa).

Residue Cys28 participates in Zn(2+) binding. Residues 30–40 carry the 'HIGH' region motif; that stretch reads PTVYDHAHLGH. 3 residues coordinate Zn(2+): Cys207, His232, and Glu236. The 'KMSKS' region motif lies at 264–268; it reads KMSKS. Lys267 is a binding site for ATP.

It belongs to the class-I aminoacyl-tRNA synthetase family. It depends on Zn(2+) as a cofactor.

It is found in the cytoplasm. It catalyses the reaction tRNA(Cys) + L-cysteine + ATP = L-cysteinyl-tRNA(Cys) + AMP + diphosphate. This chain is Cysteine--tRNA ligase, found in Methanococcus aeolicus (strain ATCC BAA-1280 / DSM 17508 / OCM 812 / Nankai-3).